Consider the following 466-residue polypeptide: Uronate isomerase (466 aa).

Belongs to the metallo-dependent hydrolases superfamily. Uronate isomerase family.

It catalyses the reaction D-glucuronate = D-fructuronate. The catalysed reaction is aldehydo-D-galacturonate = keto-D-tagaturonate. The protein operates within carbohydrate metabolism; pentose and glucuronate interconversion. The protein is Uronate isomerase of Brucella suis (strain ATCC 23445 / NCTC 10510).